The primary structure comprises 327 residues: GMP reductase (327 aa).

Cysteine 176 serves as the catalytic Thioimidate intermediate. NADP(+) is bound at residue 205–228; it reads IIADGGIRTHGDIAKSIRFGASMV.

This sequence belongs to the IMPDH/GMPR family. GuaC type 2 subfamily.

The enzyme catalyses IMP + NH4(+) + NADP(+) = GMP + NADPH + 2 H(+). In terms of biological role, catalyzes the irreversible NADPH-dependent deamination of GMP to IMP. It functions in the conversion of nucleobase, nucleoside and nucleotide derivatives of G to A nucleotides, and in maintaining the intracellular balance of A and G nucleotides. The protein is GMP reductase of Streptococcus pyogenes serotype M3 (strain ATCC BAA-595 / MGAS315).